The chain runs to 208 residues: Probable GTP-binding protein EngB (208 aa).

The EngB-type G domain occupies 18-187; that stretch reads KQFEICVIGR…FALMKKVVIQ (170 aa). Residues 26–33, 52–56, 69–72, 135–138, and 166–168 contribute to the GTP site; these read GRSNVGKS, GRTQL, DLPG, NKLD, and VSA. 2 residues coordinate Mg(2+): serine 33 and threonine 54.

The protein belongs to the TRAFAC class TrmE-Era-EngA-EngB-Septin-like GTPase superfamily. EngB GTPase family. It depends on Mg(2+) as a cofactor.

Functionally, necessary for normal cell division and for the maintenance of normal septation. The chain is Probable GTP-binding protein EngB from Ureaplasma parvum serovar 3 (strain ATCC 27815 / 27 / NCTC 11736).